The sequence spans 508 residues: MGLPWYRVHTVVLNDPGRLLSVHIMHTALVAGWAGSMALYELAVFDPSDPVLDPMWRQGMFVIPFMTRLGITNSWGGWSITGGTVTNPGIWSYEGVAGAHIVFSGLCFLAAIWHWVYWDLEIFCDERTGKPSLDLPKIFGIHLFLSGLACFGFGAFHVTGLYGPGIWVSDPYGLTGKVQPVNPAWGVEGFDPFVPGGIASHHIAAGTLGILAGLFHLSVRPPQRLYKGLRMGNIETVLSSSIAAVFFAAFVVAGTMWYGSATTPIELFGPTRYQWDQGYFQQEIYRRVSAGLAENQSLSEAWSKIPEKLAFYDYIGNNPAKGGLFRAGSMDNGDGIAVGWLGHPIFRDKEGRELFVRRMPTFFETFPVVLVDGDGIVRADVPFRRAESKYSVEQVGVTVAFYGGELNGVSYSDPTTVKKYARRAQLGEIFELDRATLKSDGVFRSSPRGWFTFGHASFALLFFFGHIWHGARTLFRDVFAGIDPDLDAQVEFGAFLKLGDPTTKRQAA.

6 consecutive transmembrane segments (helical) span residues 21 to 36, 101 to 115, 140 to 156, 203 to 218, 237 to 252, and 457 to 472; these read SVHI…WAGS, IVFS…IWHW, GIHL…FGAF, IAAG…FHLS, VLSS…AFVV, and SFAL…HGAR.

Belongs to the PsbB/PsbC family. PsbB subfamily. In terms of assembly, PSII is composed of 1 copy each of membrane proteins PsbA, PsbB, PsbC, PsbD, PsbE, PsbF, PsbH, PsbI, PsbJ, PsbK, PsbL, PsbM, PsbT, PsbX, PsbY, PsbZ, Psb30/Ycf12, at least 3 peripheral proteins of the oxygen-evolving complex and a large number of cofactors. It forms dimeric complexes. The cofactor is Binds multiple chlorophylls. PSII binds additional chlorophylls, carotenoids and specific lipids..

Its subcellular location is the plastid. The protein localises to the chloroplast thylakoid membrane. One of the components of the core complex of photosystem II (PSII). It binds chlorophyll and helps catalyze the primary light-induced photochemical processes of PSII. PSII is a light-driven water:plastoquinone oxidoreductase, using light energy to abstract electrons from H(2)O, generating O(2) and a proton gradient subsequently used for ATP formation. In Ipomoea purpurea (Common morning glory), this protein is Photosystem II CP47 reaction center protein.